The chain runs to 359 residues: Alanine racemase, biosynthetic (359 aa).

Lys-34 serves as the catalytic Proton acceptor; specific for D-alanine. Lys-34 bears the N6-(pyridoxal phosphate)lysine mark. Arg-129 provides a ligand contact to substrate. Catalysis depends on Tyr-255, which acts as the Proton acceptor; specific for L-alanine. Position 303 (Met-303) interacts with substrate.

This sequence belongs to the alanine racemase family. Pyridoxal 5'-phosphate is required as a cofactor.

The catalysed reaction is L-alanine = D-alanine. It participates in amino-acid biosynthesis; D-alanine biosynthesis; D-alanine from L-alanine: step 1/1. The protein operates within cell wall biogenesis; peptidoglycan biosynthesis. In terms of biological role, catalyzes the interconversion of L-alanine and D-alanine. Provides the D-alanine required for cell wall biosynthesis. This Salmonella typhi protein is Alanine racemase, biosynthetic (alr).